We begin with the raw amino-acid sequence, 319 residues long: Acetyl esterase (319 aa).

An Involved in the stabilization of the negatively charged intermediate by the formation of the oxyanion hole motif is present at residues 91–93; it reads HGG. Active-site residues include S165, D262, and H292.

Belongs to the 'GDXG' lipolytic enzyme family. As to quaternary structure, homodimer. Interacts with MalT and MelA.

The protein localises to the cytoplasm. Functionally, displays esterase activity towards short chain fatty esters (acyl chain length of up to 8 carbons). Able to hydrolyze triacetylglycerol (triacetin) and tributyrylglycerol (tributyrin), but not trioleylglycerol (triolein) or cholesterol oleate. Negatively regulates MalT activity by antagonizing maltotriose binding. Inhibits MelA galactosidase activity. The chain is Acetyl esterase from Escherichia coli O157:H7.